Reading from the N-terminus, the 276-residue chain is tRNA dimethylallyltransferase (276 aa).

Positions 9-12 (DSLS) are interaction with substrate tRNA.

Belongs to the IPP transferase family. In terms of assembly, monomer. It depends on Mg(2+) as a cofactor.

It carries out the reaction adenosine(37) in tRNA + dimethylallyl diphosphate = N(6)-dimethylallyladenosine(37) in tRNA + diphosphate. Functionally, catalyzes the transfer of a dimethylallyl group onto the adenine at position 37 in tRNAs that read codons beginning with uridine, leading to the formation of N6-(dimethylallyl)adenosine (i(6)A). This is tRNA dimethylallyltransferase (miaA) from Helicobacter pylori (strain Shi470).